The following is a 1378-amino-acid chain: DNA-directed RNA polymerase subunit beta (1378 aa).

It belongs to the RNA polymerase beta chain family. In terms of assembly, the RNAP catalytic core consists of 2 alpha, 1 beta, 1 beta' and 1 omega subunit. When a sigma factor is associated with the core the holoenzyme is formed, which can initiate transcription.

It catalyses the reaction RNA(n) + a ribonucleoside 5'-triphosphate = RNA(n+1) + diphosphate. Functionally, DNA-dependent RNA polymerase catalyzes the transcription of DNA into RNA using the four ribonucleoside triphosphates as substrates. This Ruegeria pomeroyi (strain ATCC 700808 / DSM 15171 / DSS-3) (Silicibacter pomeroyi) protein is DNA-directed RNA polymerase subunit beta.